Reading from the N-terminus, the 90-residue chain is Small ribosomal subunit protein bS18A (90 aa).

This sequence belongs to the bacterial ribosomal protein bS18 family. As to quaternary structure, part of the 30S ribosomal subunit. Forms a tight heterodimer with protein bS6.

Its function is as follows. Binds as a heterodimer with protein bS6 to the central domain of the 16S rRNA, where it helps stabilize the platform of the 30S subunit. The protein is Small ribosomal subunit protein bS18A of Roseiflexus castenholzii (strain DSM 13941 / HLO8).